The chain runs to 434 residues: Glutamate-1-semialdehyde 2,1-aminomutase 1 (434 aa).

Lys-270 is modified (N6-(pyridoxal phosphate)lysine).

Belongs to the class-III pyridoxal-phosphate-dependent aminotransferase family. HemL subfamily. As to quaternary structure, homodimer. It depends on pyridoxal 5'-phosphate as a cofactor.

It is found in the cytoplasm. It carries out the reaction (S)-4-amino-5-oxopentanoate = 5-aminolevulinate. It functions in the pathway porphyrin-containing compound metabolism; protoporphyrin-IX biosynthesis; 5-aminolevulinate from L-glutamyl-tRNA(Glu): step 2/2. The protein is Glutamate-1-semialdehyde 2,1-aminomutase 1 of Bacillus thuringiensis (strain Al Hakam).